The following is a 319-amino-acid chain: L-lactate dehydrogenase 2 (319 aa).

NAD(+)-binding positions include V16, D37, K42, Y68, and 82–83 (GA). Positions 85 and 91 each coordinate substrate. NAD(+)-binding positions include S104, 121-123 (AAN), and S146. Position 123-126 (123-126 (NPVD)) interacts with substrate. 151–154 (DSAR) lines the substrate pocket. Residue H178 is the Proton acceptor of the active site. Position 222 is a phosphotyrosine (Y222). T231 contributes to the substrate binding site.

This sequence belongs to the LDH/MDH superfamily. LDH family. As to quaternary structure, homotetramer.

It is found in the cytoplasm. It carries out the reaction (S)-lactate + NAD(+) = pyruvate + NADH + H(+). It participates in fermentation; pyruvate fermentation to lactate; (S)-lactate from pyruvate: step 1/1. In terms of biological role, catalyzes the conversion of lactate to pyruvate (Potential). Contributes to S.aureus growth during nitrosative stress in both aerobically and anaerobically cultured cells, despite playing a secondary role in this resistance mechanism. This is L-lactate dehydrogenase 2 from Staphylococcus aureus (strain Mu3 / ATCC 700698).